The chain runs to 544 residues: L-aspartate oxidase (544 aa).

FAD contacts are provided by residues 17–20 (SGGA), Lys-39, 46–53 (STFYAQGG), and Asp-221. Arg-288 functions as the Proton donor/acceptor in the catalytic mechanism. FAD contacts are provided by residues Glu-373 and 389–390 (SL).

The protein belongs to the FAD-dependent oxidoreductase 2 family. NadB subfamily. FAD is required as a cofactor.

It is found in the cytoplasm. The enzyme catalyses L-aspartate + O2 = iminosuccinate + H2O2. It participates in cofactor biosynthesis; NAD(+) biosynthesis; iminoaspartate from L-aspartate (oxidase route): step 1/1. Its function is as follows. Catalyzes the oxidation of L-aspartate to iminoaspartate, the first step in the de novo biosynthesis of NAD(+). The sequence is that of L-aspartate oxidase from Acinetobacter baylyi (strain ATCC 33305 / BD413 / ADP1).